Consider the following 699-residue polypeptide: Elongation factor G (699 aa).

The tr-type G domain maps to 8–290 (NKYRNLGIMA…KVIELLPSPV (283 aa)). Residues 17–24 (AHIDAGKT), 88–92 (DTPGH), and 142–145 (NKMD) each bind GTP.

Belongs to the TRAFAC class translation factor GTPase superfamily. Classic translation factor GTPase family. EF-G/EF-2 subfamily.

It is found in the cytoplasm. Functionally, catalyzes the GTP-dependent ribosomal translocation step during translation elongation. During this step, the ribosome changes from the pre-translocational (PRE) to the post-translocational (POST) state as the newly formed A-site-bound peptidyl-tRNA and P-site-bound deacylated tRNA move to the P and E sites, respectively. Catalyzes the coordinated movement of the two tRNA molecules, the mRNA and conformational changes in the ribosome. This chain is Elongation factor G, found in Dichelobacter nodosus (strain VCS1703A).